We begin with the raw amino-acid sequence, 241 residues long: MGRAFEVRKSSMAKTANAKTKVNSKYGKEIYVAAKNGEPDPDVNQTLRRLIEKAKKDQVPAHVIEKAIEKAAGGAGEDYSTARYEGYGPGNCMVIVDCLTDNPNRTIKDVRLPFTKTDSKIGTPGCVAHMFDHFAVLGFSGDDDEVVLEALMMADVDVTDVEVEDGKVSVFAPHTEYFKAKTALEEAFEGINFEVDEITFVPQVHIEITDEEVIANFDKFITMLEDCDDVQNIYHNAIIKN.

The protein belongs to the TACO1 family.

It is found in the cytoplasm. This is Probable transcriptional regulatory protein PSHAb0060 from Pseudoalteromonas translucida (strain TAC 125).